We begin with the raw amino-acid sequence, 399 residues long: Elongation factor Tu (399 aa).

The tr-type G domain occupies 10-207 (KTHMNVGTIG…AVDSYFPDPV (198 aa)). Residues 19 to 26 (GHIDHGKT) are G1. Residue 19–26 (GHIDHGKT) participates in GTP binding. Thr26 is a Mg(2+) binding site. The tract at residues 60–64 (GITIN) is G2. A G3 region spans residues 81–84 (DCPG). GTP-binding positions include 81–85 (DCPGH) and 136–139 (NKVD). Positions 136–139 (NKVD) are G4. Residues 174-176 (SAL) are G5.

Belongs to the TRAFAC class translation factor GTPase superfamily. Classic translation factor GTPase family. EF-Tu/EF-1A subfamily. As to quaternary structure, monomer.

The protein localises to the cytoplasm. It catalyses the reaction GTP + H2O = GDP + phosphate + H(+). In terms of biological role, GTP hydrolase that promotes the GTP-dependent binding of aminoacyl-tRNA to the A-site of ribosomes during protein biosynthesis. This chain is Elongation factor Tu, found in Petrotoga mobilis (strain DSM 10674 / SJ95).